Consider the following 858-residue polypeptide: Heat shock protein 105 kDa (858 aa).

Position 2 is an N-acetylserine (serine 2). N6-acetyllysine is present on lysine 471. Disordered stretches follow at residues 500–584 (KVPT…PPEA) and 796–858 (CEPV…MDLD). Positions 504–514 (EENEMSSEADM) are enriched in acidic residues. Residues serine 509 and serine 510 each carry the phosphoserine modification. A compositionally biased stretch (polar residues) spans 532–554 (QQDNSEAGTQPQVQTDAQQTSQS). Position 557 is a phosphoserine (serine 557). Threonine 561 is subject to Phosphothreonine. Composition is skewed to basic and acidic residues over residues 563-584 (EENK…PPEA) and 805-814 (PKIESPKLER). Serine 809 carries the phosphoserine modification. Threonine 815 is modified (phosphothreonine). Residues 821–832 (IDKKEEDLEDKN) show a composition bias toward basic and acidic residues. Residues 849–858 (EKNSVNMDLD) are compositionally biased toward polar residues.

This sequence belongs to the heat shock protein 70 family. Interacts with HSPA8/HSC70. Interacts with HSPA1A (via NBD) and HSPA1B (via NBD). In terms of processing, phosphorylation on Ser-509 may be important for regulation of the HSPA8/HSC70 chaperone activity. Highly expressed in testis. Present at lower levels in most brain regions, except cerebellum. Overexpressed in cancer cells.

It localises to the cytoplasm. In terms of biological role, acts as a nucleotide-exchange factor (NEF) for chaperone proteins HSPA1A and HSPA1B, promoting the release of ADP from HSPA1A/B thereby triggering client/substrate protein release. Prevents the aggregation of denatured proteins in cells under severe stress, on which the ATP levels decrease markedly. Inhibits HSPA8/HSC70 ATPase and chaperone activities. This chain is Heat shock protein 105 kDa (HSPH1), found in Homo sapiens (Human).